The following is a 374-amino-acid chain: Pyruvate dehydrogenase E1 component subunit beta-1, mitochondrial (374 aa).

The N-terminal 34 residues, Met-1–Tyr-34, are a transit peptide targeting the mitochondrion. Residue Glu-97 coordinates thiamine diphosphate. Residues Ile-150, Ala-198, Ile-199, and Asp-201 each coordinate K(+).

In terms of assembly, tetramer of 2 alpha and 2 beta subunits. The cofactor is thiamine diphosphate.

It is found in the mitochondrion matrix. The enzyme catalyses N(6)-[(R)-lipoyl]-L-lysyl-[protein] + pyruvate + H(+) = N(6)-[(R)-S(8)-acetyldihydrolipoyl]-L-lysyl-[protein] + CO2. Its function is as follows. The pyruvate dehydrogenase complex catalyzes the overall conversion of pyruvate to acetyl-CoA and CO(2). It contains multiple copies of three enzymatic components: pyruvate dehydrogenase (E1), dihydrolipoamide acetyltransferase (E2) and lipoamide dehydrogenase (E3). The polypeptide is Pyruvate dehydrogenase E1 component subunit beta-1, mitochondrial (Oryza sativa subsp. japonica (Rice)).